The following is a 134-amino-acid chain: DNA-directed RNA polymerase subunit omega (134 aa).

This sequence belongs to the RNA polymerase subunit omega family. As to quaternary structure, the RNAP catalytic core consists of 2 alpha, 1 beta, 1 beta' and 1 omega subunit. When a sigma factor is associated with the core the holoenzyme is formed, which can initiate transcription.

It catalyses the reaction RNA(n) + a ribonucleoside 5'-triphosphate = RNA(n+1) + diphosphate. Functionally, promotes RNA polymerase assembly. Latches the N- and C-terminal regions of the beta' subunit thereby facilitating its interaction with the beta and alpha subunits. This is DNA-directed RNA polymerase subunit omega from Rhizobium etli (strain CIAT 652).